We begin with the raw amino-acid sequence, 90 residues long: Small ribosomal subunit protein bS16 (90 aa).

This sequence belongs to the bacterial ribosomal protein bS16 family.

In Geobacillus sp. (strain WCH70), this protein is Small ribosomal subunit protein bS16.